A 602-amino-acid polypeptide reads, in one-letter code: Translation factor GUF1 homolog, organellar chromatophore (602 aa).

One can recognise a tr-type G domain in the interval 7 to 189 (SRIRNFCIIA…AIVERIPPPV (183 aa)). Residues 16–23 (AHIDHGKS), 82–86 (DTPGH), and 136–139 (NKID) contribute to the GTP site.

It belongs to the TRAFAC class translation factor GTPase superfamily. Classic translation factor GTPase family. LepA subfamily.

The protein localises to the plastid. It is found in the organellar chromatophore. The catalysed reaction is GTP + H2O = GDP + phosphate + H(+). Functionally, promotes protein synthesis. May act as a fidelity factor of the translation reaction, by catalyzing a one-codon backward translocation of tRNAs on improperly translocated ribosomes. The chain is Translation factor GUF1 homolog, organellar chromatophore from Paulinella chromatophora.